The sequence spans 124 residues: Quinol oxidase subunit 4 (124 aa).

A run of 3 helical transmembrane segments spans residues 16-36 (IVGFILSIVLTLLALWVAVYT), 44-64 (LWIIFGFAFIQAALQLLMFMH), and 78-98 (TLFGFFGAIVIVLGSIWIFAA).

This sequence belongs to the cytochrome c oxidase bacterial subunit 4 family.

Its subcellular location is the cell membrane. The enzyme catalyses 2 a quinol + O2 = 2 a quinone + 2 H2O. Catalyzes quinol oxidation with the concomitant reduction of oxygen to water. Major component for energy conversion during vegetative growth. The protein is Quinol oxidase subunit 4 (qoxD) of Bacillus subtilis (strain 168).